The chain runs to 62 residues: UPF0337 protein XAC0100 (62 aa).

Belongs to the UPF0337 (CsbD) family.

The chain is UPF0337 protein XAC0100 from Xanthomonas axonopodis pv. citri (strain 306).